We begin with the raw amino-acid sequence, 778 residues long: Ribonucleoside-diphosphate reductase large subunit (778 aa).

Residues Ser-177, 192–193, Gly-221, 419–423, and 613–617 each bind substrate; these read SC, NLCIE, and PTATS. Cys-193 and Cys-439 are disulfide-bonded. Asn-419 functions as the Proton acceptor in the catalytic mechanism. Residue Cys-421 is the Cysteine radical intermediate of the active site. Glu-423 functions as the Proton acceptor in the catalytic mechanism.

This sequence belongs to the ribonucleoside diphosphate reductase large chain family. As to quaternary structure, heterotetramer composed of a homodimer of the large subunit (R1) and a homodimer of the small subunit (R2). Larger multisubunit protein complex are also active, composed of (R1)n(R2)n.

The enzyme catalyses a 2'-deoxyribonucleoside 5'-diphosphate + [thioredoxin]-disulfide + H2O = a ribonucleoside 5'-diphosphate + [thioredoxin]-dithiol. Its activity is regulated as follows. Under complex allosteric control mediated by deoxynucleoside triphosphates and ATP binding. The type of nucleotide bound at the specificity site determines substrate preference. It seems probable that ATP makes the enzyme reduce CDP and UDP, dGTP favors ADP reduction and dTTP favors GDP reduction. Functionally, ribonucleoside-diphosphate reductase holoenzyme provides the precursors necessary for viral DNA synthesis. Allows virus growth in non-dividing cells. Catalyzes the biosynthesis of deoxyribonucleotides from the corresponding ribonucleotides. The protein is Ribonucleoside-diphosphate reductase large subunit of Ornithodoros (relapsing fever ticks).